Consider the following 230-residue polypeptide: Secretory carrier-associated membrane protein 4 (230 aa).

The Cytoplasmic portion of the chain corresponds to 1–39 (MAGKENNFPPLPHFLPLKPCFYQDFSDEIPVEHQVLVKR). 4 helical membrane passes run 40–60 (IYRL…ACLA), 61–81 (WWIA…LVLF), 106–126 (MAFF…AIGF), and 149–169 (VVML…AITI). Topologically, residues 170–230 (VKVHRIYRGA…SYSTSGSQWP (61 aa)) are cytoplasmic. Residue Thr194 is modified to Phosphothreonine. The segment at 197–230 (NPPSREAQFNSFSGNSLPEYPTVPSYSTSGSQWP) is disordered. 2 stretches are compositionally biased toward polar residues: residues 203-212 (AQFNSFSGNS) and 220-230 (PSYSTSGSQWP).

It belongs to the SCAMP family.

The protein localises to the membrane. Probably involved in membrane protein trafficking. This Rattus norvegicus (Rat) protein is Secretory carrier-associated membrane protein 4 (Scamp4).